The following is a 417-amino-acid chain: Spermidine/putrescine import ATP-binding protein PotA (417 aa).

Residues 5-308 (IILKDLTKVF…PANRFVAQFV (304 aa)) form the ABC transporter domain. An ATP-binding site is contributed by 37–44 (GPSGCGKT). The tract at residues 105–177 (DFNSKIKANL…TALKCKKINK (73 aa)) is insert.

The protein belongs to the ABC transporter superfamily. Spermidine/putrescine importer (TC 3.A.1.11.1) family. As to quaternary structure, the complex is composed of two ATP-binding proteins (PotA), two transmembrane proteins (PotB and PotC) and a solute-binding protein (PotD).

Its subcellular location is the cell membrane. It carries out the reaction ATP + H2O + polyamine-[polyamine-binding protein]Side 1 = ADP + phosphate + polyamineSide 2 + [polyamine-binding protein]Side 1.. In terms of biological role, part of the ABC transporter complex PotABCD involved in spermidine/putrescine import. Responsible for energy coupling to the transport system. The chain is Spermidine/putrescine import ATP-binding protein PotA from Onion yellows phytoplasma (strain OY-M).